The chain runs to 150 residues: Transcriptional repressor NrdR (150 aa).

Residues 3–34 (CPFCHHPQSRVIDSRTVENGFVTRRRRQCTKC) fold into a zinc finger. The region spanning 46–136 (LLVEKRNGVT…VYKSFSSMED (91 aa)) is the ATP-cone domain.

This sequence belongs to the NrdR family. Requires Zn(2+) as cofactor.

Functionally, negatively regulates transcription of bacterial ribonucleotide reductase nrd genes and operons by binding to NrdR-boxes. The chain is Transcriptional repressor NrdR from Corynebacterium kroppenstedtii (strain DSM 44385 / JCM 11950 / CIP 105744 / CCUG 35717).